The primary structure comprises 475 residues: Proton-coupled amino acid transporter 1 (475 aa).

Positions 1 to 15 are enriched in basic and acidic residues; it reads MSTQRLRNEDYHDYS. Residues 1–32 form a disordered region; that stretch reads MSTQRLRNEDYHDYSSTDVSPEESPSEGLGSF. Residues 1-50 are Cytoplasmic-facing; the sequence is MSTQRLRNEDYHDYSSTDVSPEESPSEGLGSFSPGSYQRLGENSSMTWFQ. Residues 51–71 form a helical membrane-spanning segment; it reads TLIHLLKGNIGTGLLGLPLAV. At 72–77 the chain is on the extracellular side; that stretch reads KNAGLL. A helical membrane pass occupies residues 78-98; it reads LGPLSLLVIGIVAVHCMGILV. The Cytoplasmic segment spans residues 99–140; that stretch reads KCAHHLCRRLNKPFLDYGDTVMYGLECSPSTWIRNHSHWGRR. A helical transmembrane segment spans residues 141-161; the sequence is IVDFFLVVTQLGFCCVYFVFL. Over 162 to 189 the chain is Extracellular; sequence ADNFKQVIEAANGTTTNCNNNETVILTP. N-linked (GlcNAc...) asparagine glycosylation is found at Asn173 and Asn182. Cys179 and Cys328 form a disulfide bridge. A helical transmembrane segment spans residues 190–210; the sequence is TMDSRLYMLTFLPFLVLLSFI. Topologically, residues 211–214 are cytoplasmic; sequence RNLR. The helical transmembrane segment at 215–235 threads the bilayer; it reads ILSIFSLLANISMFVSLIMIY. The Extracellular portion of the chain corresponds to 236–256; it reads QFIVQRIPDPSHLPLVAPWKT. The helical transmembrane segment at 257 to 277 threads the bilayer; sequence YPLFFGTAIFAFEGIGVVLPL. Residues 278-288 lie on the Cytoplasmic side of the membrane; the sequence is ENKMKDSQKFP. The chain crosses the membrane as a helical span at residues 289–309; sequence LILYLGMAIITVLYISLGSLG. The Extracellular segment spans residues 310–341; sequence YLQFGADIKGSITLNLPNCWLYQSVKLLYSIG. Residues 342–362 form a helical membrane-spanning segment; that stretch reads IFFTYALQFYVAAEIIIPAIV. Over 363-371 the chain is Cytoplasmic; the sequence is SRVPERFEL. Residues 372–392 form a helical membrane-spanning segment; that stretch reads VVDLSARTAMVCVTCVLAVLI. Topologically, residues 393 to 396 are extracellular; sequence PRLD. Residues 397 to 417 traverse the membrane as a helical segment; that stretch reads LVISLVGSVSSSALALIIPPL. Topologically, residues 418–438 are cytoplasmic; that stretch reads LEVTTYYGEGISPLTITKDAL. The helical transmembrane segment at 439-459 threads the bilayer; the sequence is ISILGFVGFVVGTYESLWELI. At 460–475 the chain is on the extracellular side; that stretch reads QPSHSDSSTNSTSAFI. A glycan (N-linked (GlcNAc...) asparagine) is linked at Asn469.

Belongs to the amino acid/polyamine transporter 2 family. Widely expressed and predominantly expressed in brain. Within the brain, expression restricted to neurons and not detected in glial cells. Abundant in regions rich in neurons using glutamate and GABA such as Purkinje cells in the cerebellum and pyramidal cells in the hippocampus.

It is found in the cell membrane. The protein resides in the apical cell membrane. Its subcellular location is the lysosome membrane. It catalyses the reaction glycine(in) + H(+)(in) = glycine(out) + H(+)(out). The enzyme catalyses L-proline(out) + H(+)(out) = L-proline(in) + H(+)(in). The catalysed reaction is D-proline(out) + H(+)(out) = D-proline(in) + H(+)(in). It carries out the reaction L-alanine(in) + H(+)(in) = L-alanine(out) + H(+)(out). It catalyses the reaction D-alanine(in) + H(+)(in) = D-alanine(out) + H(+)(out). The enzyme catalyses L-serine(in) + H(+)(in) = L-serine(out) + H(+)(out). The catalysed reaction is D-serine(out) + H(+)(out) = D-serine(in) + H(+)(in). It carries out the reaction 4-aminobutanoate(in) + H(+)(in) = 4-aminobutanoate(out) + H(+)(out). It catalyses the reaction beta-alanine(in) + H(+)(in) = beta-alanine(out) + H(+)(out). Its function is as follows. Electrogenic proton/amino acid symporter with selectivity for small apolar L-amino acids, their D-enantiomers and selected amino acid derivatives such as 4-aminobutanoate/GABA. May be involved in the efflux from the lysosomal compartment of neutral amino acids resulting from proteolysis. May play a role in specifying sites for exocytosis in neurons. The chain is Proton-coupled amino acid transporter 1 from Rattus norvegicus (Rat).